The primary structure comprises 263 residues: Pyrrolysine synthase (263 aa).

L-pyrrolysine-binding residues include Leu8, Val57, Ile64, and Ala107. NAD(+)-binding residues include Lys155, Val156, Asp175, Cys210, Pro228, Ile230, and Glu249.

This sequence belongs to the PylD family.

It catalyses the reaction (3R)-3-methyl-D-ornithyl-N(6)-L-lysine + NAD(+) = L-pyrrolysine + NH4(+) + NADH + 2 H(+). The protein operates within amino-acid biosynthesis; L-pyrrolysine biosynthesis. Its function is as follows. Catalyzes the ultimate step of the pyrrolysine biosynthesis pathway by converting the isopeptide (3R)-3-methyl-D-ornithyl-N(6)-L-lysine to the 22nd proteinogenic amino acid. Is able to use surrogate substrates such as (3R)-D-ornithyl-N(6)-L-lysine in vitro. The chain is Pyrrolysine synthase from Methanosarcina barkeri (strain Fusaro / DSM 804).